Reading from the N-terminus, the 733-residue chain is Polyribonucleotide nucleotidyltransferase (733 aa).

Mg(2+) contacts are provided by Asp-503 and Asp-509. Positions Pro-570–Ile-629 constitute a KH domain. The S1 motif domain occupies Gly-639–Lys-713.

Belongs to the polyribonucleotide nucleotidyltransferase family. Requires Mg(2+) as cofactor.

The protein localises to the cytoplasm. It catalyses the reaction RNA(n+1) + phosphate = RNA(n) + a ribonucleoside 5'-diphosphate. Functionally, involved in mRNA degradation. Catalyzes the phosphorolysis of single-stranded polyribonucleotides processively in the 3'- to 5'-direction. This chain is Polyribonucleotide nucleotidyltransferase, found in Chlorobaculum tepidum (strain ATCC 49652 / DSM 12025 / NBRC 103806 / TLS) (Chlorobium tepidum).